Reading from the N-terminus, the 78-residue chain is Small ribosomal subunit protein uS17 (78 aa).

It belongs to the universal ribosomal protein uS17 family. As to quaternary structure, part of the 30S ribosomal subunit.

In terms of biological role, one of the primary rRNA binding proteins, it binds specifically to the 5'-end of 16S ribosomal RNA. The chain is Small ribosomal subunit protein uS17 from Wolbachia pipientis wMel.